The primary structure comprises 349 residues: Homeobox protein engrailed (349 aa).

Disordered regions lie at residues 26–53 (DGPSPLSASTPGPSPDRPGSATMSSPLS), 146–210 (GKET…PLPP), 228–252 (PSSGRSPRCRRMKKDKAITPDEKRP), and 327–349 (STIPTEDDEDDEISSTSLQARIE). Basic and acidic residues-rich tracts occupy residues 173–188 (QMKKKEEIKEEARTES) and 242–252 (DKAITPDEKRP). Positions 249 to 308 (EKRPRTAFTAEQLSRLKHEFNENRYLTERRRQDLARELGLHENQIKIWFQNNRAKLKKSS) form a DNA-binding region, homeobox.

The protein belongs to the engrailed homeobox family.

The protein resides in the nucleus. The chain is Homeobox protein engrailed from Artemia franciscana (Brine shrimp).